The following is a 165-amino-acid chain: Cyclic pyranopterin monophosphate synthase (165 aa).

Substrate contacts are provided by residues 79 to 81 (LCH) and 117 to 118 (ME). D132 is an active-site residue.

Belongs to the MoaC family. As to quaternary structure, homohexamer; trimer of dimers.

It catalyses the reaction (8S)-3',8-cyclo-7,8-dihydroguanosine 5'-triphosphate = cyclic pyranopterin phosphate + diphosphate. It participates in cofactor biosynthesis; molybdopterin biosynthesis. Functionally, catalyzes the conversion of (8S)-3',8-cyclo-7,8-dihydroguanosine 5'-triphosphate to cyclic pyranopterin monophosphate (cPMP). The sequence is that of Cyclic pyranopterin monophosphate synthase from Chloroflexus aggregans (strain MD-66 / DSM 9485).